Reading from the N-terminus, the 227-residue chain is Uracil-DNA glycosylase (227 aa).

D65 (proton acceptor) is an active-site residue.

The protein belongs to the uracil-DNA glycosylase (UDG) superfamily. UNG family.

It is found in the cytoplasm. The catalysed reaction is Hydrolyzes single-stranded DNA or mismatched double-stranded DNA and polynucleotides, releasing free uracil.. Excises uracil residues from the DNA which can arise as a result of misincorporation of dUMP residues by DNA polymerase or due to deamination of cytosine. In Lactobacillus delbrueckii subsp. bulgaricus (strain ATCC 11842 / DSM 20081 / BCRC 10696 / JCM 1002 / NBRC 13953 / NCIMB 11778 / NCTC 12712 / WDCM 00102 / Lb 14), this protein is Uracil-DNA glycosylase.